The following is a 423-amino-acid chain: Histidine--tRNA ligase (423 aa).

It belongs to the class-II aminoacyl-tRNA synthetase family. Homodimer.

Its subcellular location is the cytoplasm. The enzyme catalyses tRNA(His) + L-histidine + ATP = L-histidyl-tRNA(His) + AMP + diphosphate + H(+). In Orientia tsutsugamushi (strain Boryong) (Rickettsia tsutsugamushi), this protein is Histidine--tRNA ligase.